Reading from the N-terminus, the 225-residue chain is Endoglucanase (225 aa).

The N-terminal stretch at 1–15 (MKVFVVLAAIVAIAN) is a signal peptide. Aspartate 29 acts as the Nucleophile in catalysis. Disulfide bonds link cysteine 30–cysteine 152, cysteine 31–cysteine 66, cysteine 35–cysteine 103, cysteine 50–cysteine 74, cysteine 104–cysteine 219, cysteine 106–cysteine 209, and cysteine 176–cysteine 187. N-linked (GlcNAc...) asparagine glycosylation occurs at asparagine 55. Residue aspartate 138 is the Proton donor of the active site.

Belongs to the glycosyl hydrolase 45 (cellulase K) family. N- and O-glycosylated. Contains hybrid- and complex-type N-glycans.

It localises to the secreted. It carries out the reaction Endohydrolysis of (1-&gt;4)-beta-D-glucosidic linkages in cellulose, lichenin and cereal beta-D-glucans.. Its activity is regulated as follows. Activity is not affected by metal ions except Mn(2+), which reduces the activity by 40-50%. However, no significant change in activity in response to 1 mM EDTA. Functionally, hydrolyzes carboxymethylcellulose (CMC). Also hydrolyzes lichenan and barley beta-1,4-D-glucan. CMC is hydrolyzed majorily to cellobiose (G2), cellotriose (G3) and cellotetraose (G4). Cellohexaose (G6) is hydrolyzed to G4 and G2 with traces of G3. Cellopentaose (G5) is completely hydrolyzed to G2 and G3, and G4 is partially hydrolyzed to G2. Does not hydrolyze G2 or G3. Does not hydrolyze crystalline cellulose, soluble starch, xylan, mannan or laminarin. The chain is Endoglucanase from Cryptopygus antarcticus (Antarctic springtail).